The primary structure comprises 541 residues: Glucose-6-phosphate isomerase (541 aa).

E354 functions as the Proton donor in the catalytic mechanism. Catalysis depends on residues H385 and K505.

It belongs to the GPI family.

It is found in the cytoplasm. It carries out the reaction alpha-D-glucose 6-phosphate = beta-D-fructose 6-phosphate. It participates in carbohydrate biosynthesis; gluconeogenesis. It functions in the pathway carbohydrate degradation; glycolysis; D-glyceraldehyde 3-phosphate and glycerone phosphate from D-glucose: step 2/4. In terms of biological role, catalyzes the reversible isomerization of glucose-6-phosphate to fructose-6-phosphate. The chain is Glucose-6-phosphate isomerase from Cupriavidus metallidurans (strain ATCC 43123 / DSM 2839 / NBRC 102507 / CH34) (Ralstonia metallidurans).